The sequence spans 1648 residues: Vitellogenin-6 (1648 aa).

A signal peptide spans 1-15 (MRFAVLLALFGLALA). The Vitellogenin domain maps to 26 to 691 (YRSGREYRYQ…SNDSVLPKEI (666 aa)). Intrachain disulfides connect cysteine 178/cysteine 203 and cysteine 219/cysteine 222. N-linked (GlcNAc...) asparagine glycans are attached at residues asparagine 237, asparagine 371, and asparagine 683. The tract at residues 1070–1092 (EKNVEYEQEDKEPKSSQLQSQIR) is disordered. Asparagine 1295 carries N-linked (GlcNAc...) asparagine glycosylation. The region spanning 1346–1514 (PECIVKSKEI…SYLSKDDECE (169 aa)) is the VWFD domain. 2 disulfide bridges follow: cysteine 1348–cysteine 1477 and cysteine 1370–cysteine 1513. 2 N-linked (GlcNAc...) asparagine glycosylation sites follow: asparagine 1584 and asparagine 1617.

The precursor protein is probably further processed into vitellin polypeptides VT2 and VT3. Post-translationally, both VT2 and VT3 polypeptides seem to be N-glycosylated.

It localises to the secreted. Functionally, precursor of the egg-yolk proteins that are sources of nutrients during embryonic development. This chain is Vitellogenin-6 (vit-6), found in Oscheius tipulae.